A 321-amino-acid polypeptide reads, in one-letter code: uncharacterized protein (321 aa).

This is an uncharacterized protein from Acanthamoeba polyphaga mimivirus (APMV).